The following is a 152-amino-acid chain: Transcriptional regulator MraZ (152 aa).

SpoVT-AbrB domains follow at residues 5-52 and 81-124; these read VNQL…PLPE and AQEL…DESL.

This sequence belongs to the MraZ family. In terms of assembly, forms oligomers.

It is found in the cytoplasm. The protein resides in the nucleoid. In Halorhodospira halophila (strain DSM 244 / SL1) (Ectothiorhodospira halophila (strain DSM 244 / SL1)), this protein is Transcriptional regulator MraZ.